Consider the following 490-residue polypeptide: Doublesex- and mab-3-related transcription factor A1 (490 aa).

Residues 1 to 13 are compositionally biased toward basic and acidic residues; the sequence is MERLPHGRRDRSG. The interval 1 to 31 is disordered; that stretch reads MERLPHGRRDRSGGCRPHLAPGRAAAPASAA. The span at 20–31 shows a compositional bias: low complexity; sequence APGRAAAPASAA. Residues 86 to 133 constitute a DNA-binding region (DM); it reads CARCRNHGVVSALKGHKRFCRWRDCACAKCTLIAERQRVMAAQVALRR. Disordered stretches follow at residues 152–171 and 207–289; these read GSSG…ESPQ and DRKQ…DLES. Over residues 207–216 the composition is skewed to basic and acidic residues; it reads DRKQEPKQRN. Composition is skewed to polar residues over residues 217–242 and 269–289; these read CESC…SKGN and PTDQ…DLES. Positions 314 to 349 constitute a DMA domain; that stretch reads RDPLGILTRIFPGYKHSRLEGILQFCKGDVVQAIEQ.

It belongs to the DMRT family. In terms of tissue distribution, widely expressed, with highest levels in ovary, testis, epididymis, preputial gland, vomeronasal organ, liver, salivary glands and heart. Also expressed throughout the brain with highest levels in the olfactory bulbs and medulla. Detected at similar levels in gonads of both sexes.

It is found in the nucleus. This chain is Doublesex- and mab-3-related transcription factor A1 (Dmrta1), found in Mus musculus (Mouse).